The sequence spans 491 residues: UDP-N-acetylmuramate--L-alanine ligase (491 aa).

Position 126–132 (126–132) interacts with ATP; the sequence is GTHGKTT.

The protein belongs to the MurCDEF family.

The protein localises to the cytoplasm. It carries out the reaction UDP-N-acetyl-alpha-D-muramate + L-alanine + ATP = UDP-N-acetyl-alpha-D-muramoyl-L-alanine + ADP + phosphate + H(+). The protein operates within cell wall biogenesis; peptidoglycan biosynthesis. Functionally, cell wall formation. The chain is UDP-N-acetylmuramate--L-alanine ligase from Salmonella gallinarum (strain 287/91 / NCTC 13346).